We begin with the raw amino-acid sequence, 225 residues long: ATP-dependent dethiobiotin synthetase BioD 1 (225 aa).

Glu13 and Thr17 together coordinate Mg(2+). 13 to 18 (EVGKTV) provides a ligand contact to ATP. Lys38 is a catalytic residue. Ser42 is a binding site for substrate. Residues Asp55 and Glu116 each coordinate Mg(2+). ATP is bound by residues Asp55, 116–119 (EGAG), and 176–177 (ND). Tyr188 provides a ligand contact to substrate. ATP is bound by residues 205–207 (PWL) and Glu212.

This sequence belongs to the dethiobiotin synthetase family. Homodimer. The cofactor is Mg(2+).

The protein localises to the cytoplasm. The catalysed reaction is (7R,8S)-7,8-diammoniononanoate + CO2 + ATP = (4R,5S)-dethiobiotin + ADP + phosphate + 3 H(+). It participates in cofactor biosynthesis; biotin biosynthesis; biotin from 7,8-diaminononanoate: step 1/2. Its function is as follows. Catalyzes a mechanistically unusual reaction, the ATP-dependent insertion of CO2 between the N7 and N8 nitrogen atoms of 7,8-diaminopelargonic acid (DAPA, also called 7,8-diammoniononanoate) to form a ureido ring. Only CTP can partially replace ATP while diaminobiotin is only 37% as effective as 7,8-diaminopelargonic acid. In another study both CTP and GTP (but not ITP, TTP or UTP) can partially replace ATP. This Escherichia coli (strain K12) protein is ATP-dependent dethiobiotin synthetase BioD 1.